A 429-amino-acid chain; its full sequence is Glutamate-1-semialdehyde 2,1-aminomutase 2 (429 aa).

Lys-268 is subject to N6-(pyridoxal phosphate)lysine.

This sequence belongs to the class-III pyridoxal-phosphate-dependent aminotransferase family. HemL subfamily. Homodimer. The cofactor is pyridoxal 5'-phosphate.

The protein resides in the cytoplasm. The catalysed reaction is (S)-4-amino-5-oxopentanoate = 5-aminolevulinate. Its pathway is porphyrin-containing compound metabolism; protoporphyrin-IX biosynthesis; 5-aminolevulinate from L-glutamyl-tRNA(Glu): step 2/2. This Staphylococcus aureus (strain USA300) protein is Glutamate-1-semialdehyde 2,1-aminomutase 2.